Here is a 141-residue protein sequence, read N- to C-terminus: Sperm protein associated with the nucleus on the X chromosome N3 (141 aa).

Residues 1–10 (MEQPTSSTNG) show a composition bias toward polar residues. 2 disordered regions span residues 1-47 (MEQP…TKTS) and 66-141 (NQLE…SGED). A compositionally biased stretch (basic and acidic residues) spans 11-26 (EKTKSPCESNNKKNDE). The segment covering 66–80 (NQLENEQSQENSINP) has biased composition (polar residues). A compositionally biased stretch (acidic residues) spans 84–103 (EEDEGVDLSEGSSNEDEDLG). Positions 132–141 (EGSSQDSGED) are enriched in polar residues.

The protein belongs to the SPAN-X family.

This chain is Sperm protein associated with the nucleus on the X chromosome N3 (SPANXN3), found in Homo sapiens (Human).